A 276-amino-acid polypeptide reads, in one-letter code: uncharacterized protein (276 aa).

The protein to E.cuniculi ECU05_1600/ECU11_0130.

This is an uncharacterized protein from Encephalitozoon cuniculi (strain GB-M1) (Microsporidian parasite).